Here is a 949-residue protein sequence, read N- to C-terminus: Protocadherin alpha-11 (949 aa).

Positions 1–29 are cleaved as a signal peptide; it reads MFGFQRRGLGTPRLQLWLLLLEFWEVGSG. Cadherin domains are found at residues 30–133, 157–242, 243–349, 350–454, 455–564, and 580–677; these read QLHY…PPVF, ASDA…DPEF, DKSE…SPEV, AVTS…APAF, AQPE…APAL, and VPRS…APKA. At 30-696 the chain is on the extracellular side; that stretch reads QLHYSVSEEA…SPEAALVDVN (667 aa). Asn265 and Asn304 each carry an N-linked (GlcNAc...) asparagine glycan. N-linked (GlcNAc...) asparagine glycosylation occurs at Asn547. Residues 697–717 traverse the membrane as a helical segment; the sequence is VYLIIAICVVSSLLVLTLLLY. The Cytoplasmic portion of the chain corresponds to 718–949; it reads TALWWSATPT…GNSTTDNSDQ (232 aa). 2 PXXP repeats span residues 733–736 and 773–776; these read PGKP and PSLP. A 6 X 4 AA repeats of P-X-X-P region spans residues 733–893; sequence PGKPTLVCSR…PDKFIIPGSP (161 aa). Disordered regions lie at residues 753–807 and 826–949; these read RRQR…DWRY and ILRA…NSDQ. Over residues 780–789 the composition is skewed to basic and acidic residues; the sequence is NKEEEGERQE. PXXP repeat units follow at residues 795–798, 831–834, 872–875, and 890–893; these read PGQP, PGGP, PGNP, and PGSP. The segment covering 908–922 has biased composition (basic and acidic residues); sequence DKSDFITFGKKEETK.

The protein resides in the cell membrane. Functionally, potential calcium-dependent cell-adhesion protein. May be involved in the establishment and maintenance of specific neuronal connections in the brain. The chain is Protocadherin alpha-11 (PCDHA11) from Homo sapiens (Human).